Consider the following 100-residue polypeptide: Noncompact myelin-associated protein (100 aa).

At 1–28 (MTTATTLGDAVFSLNMTRGEDILYKSSG) the chain is on the extracellular side. The helical transmembrane segment at 29–49 (AIVAAIVVVVVIIVTLVLILL) threads the bilayer. Residues 50–100 (KMYNRRMRTRRELEPKSPKPPVPPALDPNSNGSQQPAAVTSDPADVPVETR) lie on the Cytoplasmic side of the membrane. Residues 58-100 (TRRELEPKSPKPPVPPALDPNSNGSQQPAAVTSDPADVPVETR) are disordered. The segment covering 77 to 87 (PNSNGSQQPAA) has biased composition (polar residues).

In terms of processing, glycosylated. As to expression, expressed in the peripheral nervous system Schwann cells (at protein level).

The protein localises to the cell membrane. In terms of biological role, plays a role in myelin formation. This is Noncompact myelin-associated protein (Ncmap) from Rattus norvegicus (Rat).